Reading from the N-terminus, the 189-residue chain is Dual-action ribosomal maturation protein DarP (189 aa).

The segment at 1-22 is disordered; the sequence is MWKNGAMRGCNKETGEFLGPSR.

It belongs to the DarP family.

It localises to the cytoplasm. Member of a network of 50S ribosomal subunit biogenesis factors which assembles along the 30S-50S interface, preventing incorrect 23S rRNA structures from forming. Promotes peptidyl transferase center (PTC) maturation. The chain is Dual-action ribosomal maturation protein DarP from Xylella fastidiosa (strain Temecula1 / ATCC 700964).